The following is a 358-amino-acid chain: Putative ankyrin repeat protein FPV242 (358 aa).

ANK repeat units follow at residues 6-35, 40-69, 91-118, 119-147, 149-177, 180-209, 214-243, 248-277, 280-312, and 316-345; these read NNYR…NMIV, NNHT…NLVY, TRRN…DKGV, ELTG…SVEY, GFFP…DINK, CGET…DIEK, EQDP…SIDT, NHKP…NPFI, EGNT…RLPG, and YYIQ…RITS.

In Fowlpox virus (strain NVSL) (FPV), this protein is Putative ankyrin repeat protein FPV242.